Consider the following 197-residue polypeptide: dTTP/UTP pyrophosphatase (197 aa).

The active-site Proton acceptor is the Asp-70.

It belongs to the Maf family. YhdE subfamily. The cofactor is a divalent metal cation.

The protein resides in the cytoplasm. It catalyses the reaction dTTP + H2O = dTMP + diphosphate + H(+). It carries out the reaction UTP + H2O = UMP + diphosphate + H(+). Nucleoside triphosphate pyrophosphatase that hydrolyzes dTTP and UTP. May have a dual role in cell division arrest and in preventing the incorporation of modified nucleotides into cellular nucleic acids. The chain is dTTP/UTP pyrophosphatase (yceF2) from Shigella boydii serotype 4 (strain Sb227).